We begin with the raw amino-acid sequence, 417 residues long: NADH-quinone oxidoreductase subunit D (417 aa).

This sequence belongs to the complex I 49 kDa subunit family. In terms of assembly, NDH-1 is composed of 14 different subunits. Subunits NuoB, C, D, E, F, and G constitute the peripheral sector of the complex.

The protein resides in the cell inner membrane. The catalysed reaction is a quinone + NADH + 5 H(+)(in) = a quinol + NAD(+) + 4 H(+)(out). NDH-1 shuttles electrons from NADH, via FMN and iron-sulfur (Fe-S) centers, to quinones in the respiratory chain. The immediate electron acceptor for the enzyme in this species is believed to be ubiquinone. Couples the redox reaction to proton translocation (for every two electrons transferred, four hydrogen ions are translocated across the cytoplasmic membrane), and thus conserves the redox energy in a proton gradient. This chain is NADH-quinone oxidoreductase subunit D, found in Legionella pneumophila subsp. pneumophila (strain Philadelphia 1 / ATCC 33152 / DSM 7513).